A 98-amino-acid chain; its full sequence is Growth-regulated protein homolog gamma (98 aa).

The N-terminal stretch at 1–29 is a signal peptide; the sequence is MAPAASSAPRLLRAAMLLLLLVAAGRRAA. 2 disulfides stabilise this stretch: C39/C65 and C41/C81.

This sequence belongs to the intercrine alpha (chemokine CxC) family.

Its subcellular location is the secreted. This chain is Growth-regulated protein homolog gamma, found in Bos taurus (Bovine).